Consider the following 436-residue polypeptide: Putative actin-fragmin kinase DDB_G0268748 (436 aa).

Residues 14-58 (DKNIDSGSSSSNIGGSSSNSSGTTNKRSSGNFNGSSASSSPSSST) form a disordered region. A compositionally biased stretch (low complexity) spans 18–57 (DSGSSSSNIGGSSSNSSGTTNKRSSGNFNGSSASSSPSSS).

This sequence belongs to the protein kinase superfamily. AFK Ser/Thr protein kinase family.

The protein is Putative actin-fragmin kinase DDB_G0268748 of Dictyostelium discoideum (Social amoeba).